The following is a 53-amino-acid chain: Conotoxin Cal6.27 (53 aa).

The first 24 residues, 1–24 (MKLTCVLIAAMLLLAVCQLDSADA), serve as a signal peptide directing secretion. 3 disulfides stabilise this stretch: C29/C43, C36/C47, and C42/C51.

This sequence belongs to the conotoxin O1 superfamily. In terms of tissue distribution, expressed by the venom duct.

It localises to the secreted. In terms of biological role, probable neurotoxin. The polypeptide is Conotoxin Cal6.27 (Californiconus californicus (California cone)).